The following is a 68-amino-acid chain: Conotoxin phi-MiXXVIIA (68 aa).

Positions 1–29 are cleaved as a signal peptide; it reads MRFFFLLLTVALFLTSITGDDAERMLGMK. The propeptide occupies 30–35; that stretch reads EGGYVR. 4 disulfides stabilise this stretch: cysteine 38-cysteine 49, cysteine 42-cysteine 51, cysteine 45-cysteine 56, and cysteine 50-cysteine 61.

The protein belongs to the conotoxin G2 superfamily. 1 family. In terms of tissue distribution, expressed by the venom duct.

It localises to the secreted. Its function is as follows. This peptide promotes cell proliferation (EC(50)=17.85 uM) and inhibits apoptosis (EC(50)=2.2 uM). The polypeptide is Conotoxin phi-MiXXVIIA (Conus miles (Soldier cone)).